The sequence spans 1088 residues: RNA-directed RNA polymerase (1088 aa).

One can recognise a RdRp catalytic domain in the interval 501-687; it reads LSYGDVTRFL…AKRYIAGGKI (187 aa).

Belongs to the reoviridae RNA-directed RNA polymerase family. In terms of assembly, interacts with VP3 (Potential). Interacts with VP2; this interaction activates VP1. Interacts with NSP5; this interaction is probably necessary for the formation of functional virus factories. Interacts with NSP2; this interaction is weak. The cofactor is Mg(2+).

Its subcellular location is the virion. The catalysed reaction is RNA(n) + a ribonucleoside 5'-triphosphate = RNA(n+1) + diphosphate. RNA-directed RNA polymerase that is involved in both transcription and genome replication. Together with VP3 capping enzyme, forms an enzyme complex positioned near the channels situated at each of the five-fold vertices of the core. Following infection, the outermost layer of the virus is lost, leaving a double-layered particle (DLP) made up of the core and VP6 shell. VP1 then catalyzes the transcription of fully conservative plus-strand genomic RNAs that are extruded through the DLP's channels into the cytoplasm where they function as mRNAs for translation of viral proteins. One copy of each of the viral (+)RNAs is also recruited during core assembly, together with newly synthesized polymerase complexes and VP2. The polymerase of these novo-formed particles catalyzes the synthesis of complementary minus-strands leading to dsRNA formation. To do so, the polymerase specifically recognizes and binds 4 bases 5'-UGUG-3' in the conserved 3'-sequence of plus-strand RNA templates. VP2 presumably activates the autoinhibited VP1-RNA complex to coordinate packaging and genome replication. Once dsRNA synthesis is complete, the polymerase switches to the transcriptional mode, thus providing secondary transcription. The polypeptide is RNA-directed RNA polymerase (Sus scrofa (Pig)).